The sequence spans 152 residues: S-protein homolog 4 (152 aa).

Residues 1 to 23 form the signal peptide; that stretch reads MTTMLKTQVHVVVIYLLIQIAFS. Asparagine 71 carries an N-linked (GlcNAc...) asparagine glycan.

This sequence belongs to the plant self-incompatibility (S1) protein family.

The protein localises to the secreted. This chain is S-protein homolog 4, found in Arabidopsis thaliana (Mouse-ear cress).